A 182-amino-acid chain; its full sequence is ATP synthase subunit delta (182 aa).

The protein belongs to the ATPase delta chain family. F-type ATPases have 2 components, F(1) - the catalytic core - and F(0) - the membrane proton channel. F(1) has five subunits: alpha(3), beta(3), gamma(1), delta(1), epsilon(1). F(0) has three main subunits: a(1), b(2) and c(10-14). The alpha and beta chains form an alternating ring which encloses part of the gamma chain. F(1) is attached to F(0) by a central stalk formed by the gamma and epsilon chains, while a peripheral stalk is formed by the delta and b chains.

Its subcellular location is the cell membrane. Its activity is regulated as follows. Increases 2-fold following exposure to low pH. Functionally, f(1)F(0) ATP synthase produces ATP from ADP in the presence of a proton or sodium gradient. F-type ATPases consist of two structural domains, F(1) containing the extramembraneous catalytic core and F(0) containing the membrane proton channel, linked together by a central stalk and a peripheral stalk. During catalysis, ATP synthesis in the catalytic domain of F(1) is coupled via a rotary mechanism of the central stalk subunits to proton translocation. Its function is as follows. This protein is part of the stalk that links CF(0) to CF(1). It either transmits conformational changes from CF(0) to CF(1) or is implicated in proton conduction. The polypeptide is ATP synthase subunit delta (Lactobacillus acidophilus (strain ATCC 700396 / NCK56 / N2 / NCFM)).